We begin with the raw amino-acid sequence, 606 residues long: MQAEPAFDAKAFCAGLPSQPGVYRMMNSAGQVIYVGKAIDLKKRVSSYFQKNGLAPRTQLMVSQIAGIETTVTRSEAEALLLENNLIKSLNPRYNILFRDDKSYPYVILSGHRFPRLGFHRGPLDKKHHYFGPFPNAGMVRESIQLLQKVFRIRTCEDSVFSNRTRPCLLYQIKRCSGPCVDLVSEEVYAEDARDAELFLQGKQTEVLKSITRKMHEAAEEQEYEQAALFRDQIQSLRKICERQFVDSGRALDADIVACVAENNGGGRVCVNLAMVRGGRHLGDKSFFPQNAEGYDLATVAEAFLAQHYLNRSIPDLIIVGERVPRESLQALLTQQAGHKVIINVNPIGSRRVWLEMATENAALALEQMLGRQASQEERLLALQQALDMTGLSRIECFDISHTMGEATIASCVVYDNFGMRNSEYRRYNITDITPGDDYAAMRDVLSRRYHKIAEGEGNLPDLILIDGGRGQINAALEVMVELGLNDANLVGVAKGEERKPGLEQLIFPGVKKPLQLSKDHPGLHLIQQIRDEAHRFAIYGHRAKLGKARVSSSLEQIAGIGAKRRQSLLARFGGLKGVRTASIEELQQADGISRALAEKIYRELH.

A GIY-YIG domain is found at serine 18–isoleucine 96. The 36-residue stretch at threonine 205–isoleucine 240 folds into the UVR domain.

This sequence belongs to the UvrC family. In terms of assembly, interacts with UvrB in an incision complex.

It is found in the cytoplasm. Functionally, the UvrABC repair system catalyzes the recognition and processing of DNA lesions. UvrC both incises the 5' and 3' sides of the lesion. The N-terminal half is responsible for the 3' incision and the C-terminal half is responsible for the 5' incision. The polypeptide is UvrABC system protein C (Nitrosospira multiformis (strain ATCC 25196 / NCIMB 11849 / C 71)).